The primary structure comprises 386 residues: O-methyltransferase 11 (386 aa).

S207, G231, D254, D274, and K288 together coordinate S-adenosyl-L-homocysteine. D254 contributes to the S-adenosyl-L-methionine binding site. H292 acts as the Proton acceptor in catalysis.

Belongs to the class I-like SAM-binding methyltransferase superfamily. Cation-independent O-methyltransferase family. As to quaternary structure, homodimer.

It carries out the reaction dopamine + S-adenosyl-L-methionine = 4-methoxytyramine + S-adenosyl-L-homocysteine + H(+). The catalysed reaction is 3,4-dihydroxy-5-methoxyphenethylamine + S-adenosyl-L-methionine = 3-hydroxy-4,5-dimethoxyphenethylamine + S-adenosyl-L-homocysteine + H(+). The enzyme catalyses 3-hydroxy-4,5-dimethoxyphenethylamine + S-adenosyl-L-methionine = mescaline + S-adenosyl-L-homocysteine + H(+). It catalyses the reaction 4-hydroxy-3,5-dimethoxyphenethylamine + S-adenosyl-L-methionine = mescaline + S-adenosyl-L-homocysteine + H(+). It functions in the pathway aromatic compound metabolism. It participates in alkaloid biosynthesis. O-methyltransferase participating in the biosynthesis of natural products derived from phenylethylamine, including mescaline, a natural hallucinogen potentially used in psychotherapeutic treatments. Catalyzes the O-methylation of mescaline para hydroxyl groups, using dopamine, 3,4-dihydroxy-5-methoxyphenethylamine, 3-hydroxy-4,5-dimethoxyphenethylamine and 4-hydroxy-3,5-dimethoxyphenethylamine as substrates. The sequence is that of O-methyltransferase 11 from Lophophora williamsii (Peyote).